We begin with the raw amino-acid sequence, 94 residues long: DNA-directed RNA polymerase subunit omega (94 aa).

It belongs to the RNA polymerase subunit omega family. The RNAP catalytic core consists of 2 alpha, 1 beta, 1 beta' and 1 omega subunit. When a sigma factor is associated with the core the holoenzyme is formed, which can initiate transcription.

The catalysed reaction is RNA(n) + a ribonucleoside 5'-triphosphate = RNA(n+1) + diphosphate. In terms of biological role, promotes RNA polymerase assembly. Latches the N- and C-terminal regions of the beta' subunit thereby facilitating its interaction with the beta and alpha subunits. The sequence is that of DNA-directed RNA polymerase subunit omega from Frankia casuarinae (strain DSM 45818 / CECT 9043 / HFP020203 / CcI3).